Reading from the N-terminus, the 264-residue chain is Glucosamine-6-phosphate deaminase (264 aa).

Residue aspartate 67 is the Proton acceptor; for enolization step of the active site. Asparagine 136 functions as the For ring-opening step in the catalytic mechanism. Histidine 138 acts as the Proton acceptor; for ring-opening step in catalysis. Glutamate 143 serves as the catalytic For ring-opening step.

Belongs to the glucosamine/galactosamine-6-phosphate isomerase family. NagB subfamily. In terms of assembly, homohexamer.

It catalyses the reaction alpha-D-glucosamine 6-phosphate + H2O = beta-D-fructose 6-phosphate + NH4(+). Its pathway is amino-sugar metabolism; N-acetylneuraminate degradation; D-fructose 6-phosphate from N-acetylneuraminate: step 5/5. Catalyzes the reversible isomerization-deamination of glucosamine 6-phosphate (GlcN6P) to form fructose 6-phosphate (Fru6P) and ammonium ion. The protein is Glucosamine-6-phosphate deaminase of Shewanella woodyi (strain ATCC 51908 / MS32).